The chain runs to 490 residues: Putative alanine aminotransferase (490 aa).

Pyridoxal 5'-phosphate contacts are provided by alanine 157, serine 158, tyrosine 183, asparagine 239, and serine 308. The residue at position 311 (lysine 311) is an N6-(pyridoxal phosphate)lysine. Arginine 320 is a binding site for pyridoxal 5'-phosphate.

Belongs to the class-I pyridoxal-phosphate-dependent aminotransferase family. Alanine aminotransferase subfamily. In terms of assembly, homodimer. It depends on pyridoxal 5'-phosphate as a cofactor.

The protein localises to the cytoplasm. The protein resides in the mitochondrion. The catalysed reaction is L-alanine + 2-oxoglutarate = pyruvate + L-glutamate. It participates in amino-acid degradation; L-alanine degradation via transaminase pathway; pyruvate from L-alanine: step 1/1. Alanine aminotransferase involved in both alanine biosynthesis and utilization. This Schizosaccharomyces pombe (strain 972 / ATCC 24843) (Fission yeast) protein is Putative alanine aminotransferase (alt1).